We begin with the raw amino-acid sequence, 87 residues long: Selenoprotein W (87 aa).

The segment at residues 10-13 (CGAU) is a cross-link (cysteinyl-selenocysteine (Cys-Sec); redox-active). A non-standard amino acid (selenocysteine) is located at residue Sec-13. At Cys-37 the chain carries S-glutathionyl cysteine.

The protein belongs to the SelWTH family. Selenoprotein W subfamily. As to quaternary structure, interacts with DPYSL2, PRDX1, YWHAB, YWHAG, HSP70 and HSP90.

It is found in the cytoplasm. Plays a role as a glutathione (GSH)-dependent antioxidant. May be involved in a redox-related process. May play a role in the myopathies of selenium deficiency. In Sus scrofa (Pig), this protein is Selenoprotein W.